The sequence spans 214 residues: Putative AgrB-like protein (214 aa).

Transmembrane regions (helical) follow at residues 41-61, 82-102, 109-129, 154-174, and 182-202; these read IISV…LIFL, CTLL…SSFF, IIVF…FKFA, ILTI…NLGW, and LSII…GNIL.

Belongs to the AgrB family.

The protein resides in the cell membrane. Its function is as follows. May be involved in the proteolytic processing of a quorum sensing system signal molecule precursor. The chain is Putative AgrB-like protein from Clostridium perfringens (strain SM101 / Type A).